The following is a 474-amino-acid chain: Alpha-galactosidase (474 aa).

The N-terminal stretch at 1 to 22 (MINFSLLTSIVLLASKVVGVSP) is a signal peptide. 2 disulfides stabilise this stretch: Cys43–Cys75 and Cys122–Cys152. The N-linked (GlcNAc...) asparagine glycan is linked to Asn44. Positions 73, 74, and 148 each coordinate substrate. The active-site Nucleophile is the Asp150. Asn176 carries an N-linked (GlcNAc...) asparagine glycan. A substrate-binding site is contributed by Arg206. Catalysis depends on Asp210, which acts as the Proton donor. 2 cysteine pairs are disulfide-bonded: Cys222/Cys238 and Cys224/Cys231. Gln252 contributes to the substrate binding site. N-linked (GlcNAc...) asparagine glycosylation is found at Asn271, Asn414, Asn423, Asn436, and Asn455.

It belongs to the glycosyl hydrolase 27 family. In terms of assembly, homotetramer.

The protein resides in the secreted. The enzyme catalyses Hydrolysis of terminal, non-reducing alpha-D-galactose residues in alpha-D-galactosides, including galactose oligosaccharides, galactomannans and galactolipids.. This chain is Alpha-galactosidase (MEL), found in Torulaspora delbrueckii (Yeast).